A 274-amino-acid chain; its full sequence is 4-diphosphocytidyl-2-C-methyl-D-erythritol kinase (274 aa).

Lysine 8 is a catalytic residue. Residue 94–104 (PSGAGLGGGSS) coordinates ATP. Aspartate 136 is a catalytic residue.

The protein belongs to the GHMP kinase family. IspE subfamily.

The enzyme catalyses 4-CDP-2-C-methyl-D-erythritol + ATP = 4-CDP-2-C-methyl-D-erythritol 2-phosphate + ADP + H(+). It functions in the pathway isoprenoid biosynthesis; isopentenyl diphosphate biosynthesis via DXP pathway; isopentenyl diphosphate from 1-deoxy-D-xylulose 5-phosphate: step 3/6. Functionally, catalyzes the phosphorylation of the position 2 hydroxy group of 4-diphosphocytidyl-2C-methyl-D-erythritol. The chain is 4-diphosphocytidyl-2-C-methyl-D-erythritol kinase from Bacteroides thetaiotaomicron (strain ATCC 29148 / DSM 2079 / JCM 5827 / CCUG 10774 / NCTC 10582 / VPI-5482 / E50).